The chain runs to 282 residues: Bifunctional protein FolD (282 aa).

Residues 162–164 (GRS), S187, and V228 each bind NADP(+).

It belongs to the tetrahydrofolate dehydrogenase/cyclohydrolase family. Homodimer.

The enzyme catalyses (6R)-5,10-methylene-5,6,7,8-tetrahydrofolate + NADP(+) = (6R)-5,10-methenyltetrahydrofolate + NADPH. It carries out the reaction (6R)-5,10-methenyltetrahydrofolate + H2O = (6R)-10-formyltetrahydrofolate + H(+). Its pathway is one-carbon metabolism; tetrahydrofolate interconversion. Catalyzes the oxidation of 5,10-methylenetetrahydrofolate to 5,10-methenyltetrahydrofolate and then the hydrolysis of 5,10-methenyltetrahydrofolate to 10-formyltetrahydrofolate. In Thermus thermophilus (strain ATCC BAA-163 / DSM 7039 / HB27), this protein is Bifunctional protein FolD.